Reading from the N-terminus, the 460-residue chain is Allantoinase (460 aa).

Positions 70, 72, 157, 193, 250, and 323 each coordinate Zn(2+). The residue at position 157 (Lys-157) is an N6-carboxylysine.

The protein belongs to the metallo-dependent hydrolases superfamily. Allantoinase family. Homotetramer. It depends on Zn(2+) as a cofactor. In terms of processing, carboxylation allows a single lysine to coordinate two zinc ions.

It carries out the reaction (S)-allantoin + H2O = allantoate + H(+). It participates in nitrogen metabolism; (S)-allantoin degradation; allantoate from (S)-allantoin: step 1/1. Functionally, catalyzes the conversion of allantoin (5-ureidohydantoin) to allantoic acid by hydrolytic cleavage of the five-member hydantoin ring. Involved in the utilization of purines as secondary nitrogen sources, when primary sources are limiting. The chain is Allantoinase (DAL1) from Saccharomyces cerevisiae (strain ATCC 204508 / S288c) (Baker's yeast).